A 377-amino-acid chain; its full sequence is Trans-enoyl reductase FMN2 (377 aa).

Residues 7–370 enclose the Enoyl reductase (ER) domain; it reads NASGGYCLNS…DGVIRGKKLV (364 aa). The disordered stretch occupies residues 143–173; it reads LSDMTGNGRSNGYTNGHTNGHTNGHSKGEEE. The span at 144 to 155 shows a compositional bias: polar residues; the sequence is SDMTGNGRSNGY. Over residues 156-167 the composition is skewed to low complexity; that stretch reads TNGHTNGHTNGH. NADP(+)-binding positions include 186–189, 209–212, Tyr-227, and 274–275; these read ASAS, SPAN, and LD.

Belongs to the zinc-containing alcohol dehydrogenase family.

It participates in secondary metabolite biosynthesis. In terms of biological role, trans-enoyl reductase; part of the gene cluster that mediates the biosynthesis of fusamarins, isocoumarin derivatives that show moderate cytotoxicity with IC(50) values between 1 and 50 uM. The polyketide synthase FMN1 probably synthesizes two different polyketides, a tetra- and a pentaketide, containinga varying number of double bonds depending on the selective actions of the trans-enoyl reductase FMN2. Chain fusion will presumably be mediated by the KS domain before finally offloading is catalyzed by the alpha/beta hydrolase fold enzyme FMN3. This Fusarium mangiferae (Mango malformation disease fungus) protein is Trans-enoyl reductase FMN2.